The primary structure comprises 397 residues: Sporulation-specific protein 20 (397 aa).

A disordered region spans residues 1-26 (MGFRKILASKSHHSRHHNQHHKNLKL). The interval 4–50 (RKILASKSHHSRHHNQHHKNLKLQNHRYVLISNITGSHETKYLSPFR) is inhibitory region. Residues 10–26 (KSHHSRHHNQHHKNLKL) show a composition bias toward basic residues. Residues 51 to 95 (MDNCSGSRRRDRLHVKLKSLRNKIHKQLHPNCRFDDATKTSDDKC) are positive regulatory region. The region spanning 330–392 (NQMEIDLYGN…QAKRYRLEKV (63 aa)) is the t-SNARE coiled-coil homology domain.

It belongs to the SNAP-25 family. As to quaternary structure, interacts with the t-SNARE SSO1 and the v-SNARE SNC2.

Its subcellular location is the cell membrane. The protein resides in the prospore membrane. Its function is as follows. Required to maintain the prospore membrane to the nucleus during sporulation in order to capture the daughter nuclei and form the spores. Mediates the fusion of exocytic vesicles with the plasma membrane during sporulation through its interactions with the t-SNARE SSO1 and v-SNARE SNC2. The chain is Sporulation-specific protein 20 (SPO20) from Saccharomyces cerevisiae (strain ATCC 204508 / S288c) (Baker's yeast).